A 532-amino-acid chain; its full sequence is MSYLLALDAGTGSIRAVIFDLNGRQLAVGQAEWKHLSVDNVPGSMEFDLTTNWQLACQCIRQALDAARLSAADIQSVACCSMREGIVLYDRNGEAIWACANVDARASREVAELKEIHDFRFESEVYEVSGQTLALSAMPRLLWLAHHRPDIYRKAATITMISDWLAAKLSGELAVDPSNAGTTGMLDLFSRDWRPALLDMAGLRADMLSPVKETGTLLGAVTEAAAQQSGLRAGTPVVMGGGDVQLGCLGLGVVRAGQTAVLGGTFWQQVVNLPQVRTDPQMNIRVNPHVIPGMAQAESISFFTGLTMRWFRDAFCAEEKLIAERLGVDAYSLLEEMASRVPAGSHGVMPIFSDAMHFKQWYHAAPSFINLSIDPEKCNKATLFRALEENAAIVSACNLAQISQFSGVTFESLVFAGGGSKGALWSQILSDVTGLPVRVPVVREATALGCAIAAGTGAGLYDDMASTGERLVSWHREFTPNPQHRELYQEMMSKWQTVYADQLGLVDSGLTTSMWQAPGLERRQRVASSPSP.

It belongs to the FGGY kinase family.

Its subcellular location is the cytoplasm. It catalyses the reaction (S)-4,5-dihydroxypentane-2,3-dione + ATP = (2S)-2-hydroxy-3,4-dioxopentyl phosphate + ADP + H(+). Catalyzes the phosphorylation of autoinducer-2 (AI-2) to phospho-AI-2, which subsequently inactivates the transcriptional regulator LsrR and leads to the transcription of the lsr operon. Phosphorylates the ring-open form of (S)-4,5-dihydroxypentane-2,3-dione (DPD), which is the precursor to all AI-2 signaling molecules, at the C5 position. The protein is Autoinducer-2 kinase of Klebsiella pneumoniae subsp. pneumoniae (strain ATCC 700721 / MGH 78578).